Here is a 203-residue protein sequence, read N- to C-terminus: FMN-dependent NADH:quinone oxidoreductase 3 (203 aa).

FMN-binding positions include S9, 15 to 17, 95 to 98, and 139 to 142; these read SAS, MYNF, and TAGG.

It belongs to the azoreductase type 1 family. As to quaternary structure, homodimer. It depends on FMN as a cofactor.

It carries out the reaction 2 a quinone + NADH + H(+) = 2 a 1,4-benzosemiquinone + NAD(+). The enzyme catalyses N,N-dimethyl-1,4-phenylenediamine + anthranilate + 2 NAD(+) = 2-(4-dimethylaminophenyl)diazenylbenzoate + 2 NADH + 2 H(+). In terms of biological role, quinone reductase that provides resistance to thiol-specific stress caused by electrophilic quinones. Its function is as follows. Also exhibits azoreductase activity. Catalyzes the reductive cleavage of the azo bond in aromatic azo compounds to the corresponding amines. The protein is FMN-dependent NADH:quinone oxidoreductase 3 of Pseudomonas fluorescens (strain Pf0-1).